The following is a 117-amino-acid chain: Large ribosomal subunit protein bL19 (117 aa).

The protein belongs to the bacterial ribosomal protein bL19 family.

This protein is located at the 30S-50S ribosomal subunit interface and may play a role in the structure and function of the aminoacyl-tRNA binding site. This chain is Large ribosomal subunit protein bL19, found in Shewanella amazonensis (strain ATCC BAA-1098 / SB2B).